A 465-amino-acid chain; its full sequence is Trigger factor (465 aa).

The PPIase FKBP-type domain occupies 163–248; the sequence is GDVINFNFKG…INKIKENQPA (86 aa). Residues 431 to 465 form a disordered region; the sequence is EIVNKNQNDNEIEQDKEQKDNNEEKIKQENNLENK. Basic and acidic residues predominate over residues 443–465; it reads EQDKEQKDNNEEKIKQENNLENK.

Belongs to the FKBP-type PPIase family. Tig subfamily.

It localises to the cytoplasm. It carries out the reaction [protein]-peptidylproline (omega=180) = [protein]-peptidylproline (omega=0). Its function is as follows. Involved in protein export. Acts as a chaperone by maintaining the newly synthesized protein in an open conformation. Functions as a peptidyl-prolyl cis-trans isomerase. This Mesomycoplasma hyopneumoniae (strain 232) (Mycoplasma hyopneumoniae) protein is Trigger factor.